Reading from the N-terminus, the 386-residue chain is S-adenosylmethionine synthase (386 aa).

Histidine 16 lines the ATP pocket. Aspartate 18 serves as a coordination point for Mg(2+). Position 44 (glutamate 44) interacts with K(+). L-methionine contacts are provided by glutamate 57 and glutamine 100. Residues 100–110 form a flexible loop region; it reads QSRDIAQGVDR. Residues 165-167, aspartate 240, 246-247, alanine 263, and lysine 267 each bind ATP; these read DAK and RK. Position 240 (aspartate 240) interacts with L-methionine. Lysine 271 is a binding site for L-methionine.

This sequence belongs to the AdoMet synthase family. In terms of assembly, homotetramer; dimer of dimers. The cofactor is Mg(2+). K(+) serves as cofactor.

The protein localises to the cytoplasm. It carries out the reaction L-methionine + ATP + H2O = S-adenosyl-L-methionine + phosphate + diphosphate. It participates in amino-acid biosynthesis; S-adenosyl-L-methionine biosynthesis; S-adenosyl-L-methionine from L-methionine: step 1/1. Catalyzes the formation of S-adenosylmethionine (AdoMet) from methionine and ATP. The overall synthetic reaction is composed of two sequential steps, AdoMet formation and the subsequent tripolyphosphate hydrolysis which occurs prior to release of AdoMet from the enzyme. This Francisella tularensis subsp. holarctica (strain FTNF002-00 / FTA) protein is S-adenosylmethionine synthase.